A 364-amino-acid chain; its full sequence is Histidinol-phosphate aminotransferase (364 aa).

Lys226 carries the N6-(pyridoxal phosphate)lysine modification.

The protein belongs to the class-II pyridoxal-phosphate-dependent aminotransferase family. Histidinol-phosphate aminotransferase subfamily. As to quaternary structure, homodimer. Pyridoxal 5'-phosphate serves as cofactor.

It catalyses the reaction L-histidinol phosphate + 2-oxoglutarate = 3-(imidazol-4-yl)-2-oxopropyl phosphate + L-glutamate. Its pathway is amino-acid biosynthesis; L-histidine biosynthesis; L-histidine from 5-phospho-alpha-D-ribose 1-diphosphate: step 7/9. This Campylobacter jejuni (strain RM1221) protein is Histidinol-phosphate aminotransferase.